Consider the following 1004-residue polypeptide: Ephrin type-B receptor 2 (1004 aa).

The N-terminal stretch at 1 to 19 (MGPLWFCCLPLALLPLLAA) is a signal peptide. Residues 20–544 (VEETLMDSTT…QTSVQEKLPL (525 aa)) are Extracellular-facing. The 183-residue stretch at 21–203 (EETLMDSTTA…FYRKCPRVIQ (183 aa)) folds into the Eph LBD domain. 2 disulfides stabilise this stretch: Cys63–Cys185 and Cys98–Cys108. N-linked (GlcNAc...) asparagine glycans are attached at residues Asn266, Asn337, Asn429, Asn478, and Asn483. 2 Fibronectin type-III domains span residues 325-435 (IPSA…TNQA) and 436-531 (APSA…TMTE). A helical membrane pass occupies residues 545–565 (IIGSSAAGLVFLIAVVVIIIV). The Cytoplasmic portion of the chain corresponds to 566 to 1004 (CNRRRGFERA…QMNQIQSVEV (439 aa)). The Protein kinase domain maps to 639–902 (VKIEQVIGAG…QIVNTLDKMI (264 aa)). ATP-binding positions include 645–653 (IGAGEFGEV) and Lys671. The active-site Proton acceptor is the Asp764. The SAM domain occupies 931–995 (TSFNTVDEWL…LNSIQVMRAQ (65 aa)). Positions 1002 to 1004 (VEV) match the PDZ-binding motif.

The protein belongs to the protein kinase superfamily. Tyr protein kinase family. Ephrin receptor subfamily. As to quaternary structure, heterotetramer upon binding of the ligand. The heterotetramer is composed of an ephrin dimer and a receptor dimer. Oligomerization is probably required to induce biological responses. Post-translationally, ligand binding induces cleavage by matrix metalloproteinases (MMPs) such as MMP7/MMP9, producing an EphB2/N-terminal fragment (NTF) and a C-terminal long fragment (EphB2-LF). EphB2-LF is further cleaved by MMPs, producing EphB2/CTF1 which is further cleaved by the PS1/gamma-secretase producing EphB2/CTF2. As to expression, wide tissue distribution throughout development and sustained expression in adult brain. The longer form (CEK5+) is specifically expressed in the central nervous system.

Its subcellular location is the cell membrane. The protein resides in the cell projection. The protein localises to the axon. It is found in the dendrite. It catalyses the reaction L-tyrosyl-[protein] + ATP = O-phospho-L-tyrosyl-[protein] + ADP + H(+). Functionally, receptor tyrosine kinase which binds promiscuously transmembrane ephrin-B family ligands residing on adjacent cells, leading to contact-dependent bidirectional signaling into neighboring cells. The signaling pathway downstream of the receptor is referred to as forward signaling while the signaling pathway downstream of the ephrin ligand is referred to as reverse signaling. Functions in axon guidance during development. In addition to axon guidance, also regulates dendritic spines development and maturation and stimulates the formation of excitatory synapses. The protein is Ephrin type-B receptor 2 (EPHB2) of Gallus gallus (Chicken).